The chain runs to 408 residues: Biphenyl dioxygenase system ferredoxin--NAD(+) reductase component (408 aa).

Position 4–35 (4–35 (TIAIIGAGLAGSTAARALRAQGYEGRIHLLGD)) interacts with FAD. NAD(+) is bound at residue 145–173 (SLVIVGGGLIGCEVATTARKLSVHVTILE).

The protein belongs to the bacterial ring-hydroxylating dioxygenase ferredoxin reductase family. This dioxygenase system consists of four proteins: the two subunits of the hydroxylase component (BphA and BphE), a ferredoxin (BphF) and a ferredoxin reductase (BphG). FAD is required as a cofactor.

The enzyme catalyses 2 reduced [2Fe-2S]-[ferredoxin] + NAD(+) + H(+) = 2 oxidized [2Fe-2S]-[ferredoxin] + NADH. Its pathway is xenobiotic degradation; biphenyl degradation. In terms of biological role, part of the electron transfer component of biphenyl dioxygenase, transfers electrons from ferredoxin (BphF) to NADH. This Paraburkholderia xenovorans (strain LB400) protein is Biphenyl dioxygenase system ferredoxin--NAD(+) reductase component (bphG).